Consider the following 185-residue polypeptide: Acireductone dioxygenase (185 aa).

Fe(2+)-binding residues include histidine 97, histidine 99, glutamate 103, and histidine 141. The Ni(2+) site is built by histidine 97, histidine 99, glutamate 103, and histidine 141.

The protein belongs to the acireductone dioxygenase (ARD) family. In terms of assembly, monomer. Fe(2+) serves as cofactor. Requires Ni(2+) as cofactor.

The enzyme catalyses 1,2-dihydroxy-5-(methylsulfanyl)pent-1-en-3-one + O2 = 3-(methylsulfanyl)propanoate + CO + formate + 2 H(+). The catalysed reaction is 1,2-dihydroxy-5-(methylsulfanyl)pent-1-en-3-one + O2 = 4-methylsulfanyl-2-oxobutanoate + formate + 2 H(+). Its pathway is amino-acid biosynthesis; L-methionine biosynthesis via salvage pathway; L-methionine from S-methyl-5-thio-alpha-D-ribose 1-phosphate: step 5/6. Catalyzes 2 different reactions between oxygen and the acireductone 1,2-dihydroxy-3-keto-5-methylthiopentene (DHK-MTPene) depending upon the metal bound in the active site. Fe-containing acireductone dioxygenase (Fe-ARD) produces formate and 2-keto-4-methylthiobutyrate (KMTB), the alpha-ketoacid precursor of methionine in the methionine recycle pathway. Ni-containing acireductone dioxygenase (Ni-ARD) produces methylthiopropionate, carbon monoxide and formate, and does not lie on the methionine recycle pathway. This chain is Acireductone dioxygenase, found in Stenotrophomonas maltophilia (strain R551-3).